The following is a 429-amino-acid chain: Enolase (429 aa).

Gln-162 serves as a coordination point for (2R)-2-phosphoglycerate. Residue Glu-204 is the Proton donor of the active site. Mg(2+) is bound by residues Asp-241, Glu-286, and Asp-313. 4 residues coordinate (2R)-2-phosphoglycerate: Lys-338, Arg-367, Ser-368, and Lys-389. Residue Lys-338 is the Proton acceptor of the active site.

Belongs to the enolase family. Requires Mg(2+) as cofactor.

It is found in the cytoplasm. It localises to the secreted. The protein localises to the cell surface. The enzyme catalyses (2R)-2-phosphoglycerate = phosphoenolpyruvate + H2O. It participates in carbohydrate degradation; glycolysis; pyruvate from D-glyceraldehyde 3-phosphate: step 4/5. In terms of biological role, catalyzes the reversible conversion of 2-phosphoglycerate (2-PG) into phosphoenolpyruvate (PEP). It is essential for the degradation of carbohydrates via glycolysis. The sequence is that of Enolase from Shouchella clausii (strain KSM-K16) (Alkalihalobacillus clausii).